Consider the following 234-residue polypeptide: Exotoxin type G (234 aa).

An N-terminal signal peptide occupies residues 1–24 (MKTNILTIIILSCVFSYGSQLAYA).

This sequence belongs to the staphylococcal/streptococcal toxin family.

Mitogenic for human peripheral blood lymphocytes. The chain is Exotoxin type G (speG) from Streptococcus pyogenes serotype M1.